The chain runs to 106 residues: Large ribosomal subunit protein uL24 (106 aa).

It belongs to the universal ribosomal protein uL24 family. Part of the 50S ribosomal subunit.

One of two assembly initiator proteins, it binds directly to the 5'-end of the 23S rRNA, where it nucleates assembly of the 50S subunit. Its function is as follows. One of the proteins that surrounds the polypeptide exit tunnel on the outside of the subunit. This is Large ribosomal subunit protein uL24 from Verminephrobacter eiseniae (strain EF01-2).